The chain runs to 430 residues: Adenylosuccinate synthetase (430 aa).

GTP-binding positions include 12 to 18 (GDEGKGK) and 40 to 42 (GHT). The Proton acceptor role is filled by aspartate 13. Residues aspartate 13 and glycine 40 each coordinate Mg(2+). Residues 13-16 (DEGK), 38-41 (NAGH), threonine 130, arginine 144, glutamine 224, threonine 239, and arginine 303 contribute to the IMP site. Histidine 41 acts as the Proton donor in catalysis. 299-305 (TVTGRKR) is a binding site for substrate. Residues arginine 305, 331-333 (KLD), and 413-415 (STS) contribute to the GTP site.

Belongs to the adenylosuccinate synthetase family. As to quaternary structure, homodimer. It depends on Mg(2+) as a cofactor.

It localises to the cytoplasm. It catalyses the reaction IMP + L-aspartate + GTP = N(6)-(1,2-dicarboxyethyl)-AMP + GDP + phosphate + 2 H(+). Its pathway is purine metabolism; AMP biosynthesis via de novo pathway; AMP from IMP: step 1/2. Plays an important role in the de novo pathway of purine nucleotide biosynthesis. Catalyzes the first committed step in the biosynthesis of AMP from IMP. The sequence is that of Adenylosuccinate synthetase from Paracoccus denitrificans (strain Pd 1222).